A 310-amino-acid polypeptide reads, in one-letter code: L-lactate dehydrogenase (310 aa).

NAD(+) contacts are provided by residues Val11, Asp32, Tyr62, and 76–77; that span reads GV. Substrate contacts are provided by residues Gln79, Arg85, and 117-120; that span reads NPVD. NAD(+) is bound by residues 115-117 and Ser140; that span reads ASN. 145–148 lines the substrate pocket; the sequence is DTAR. Beta-D-fructose 1,6-bisphosphate-binding residues include Arg150 and His165. The active-site Proton acceptor is His172. Thr227 is a binding site for substrate.

This sequence belongs to the LDH/MDH superfamily. LDH family. Homotetramer.

It localises to the cytoplasm. It catalyses the reaction (S)-lactate + NAD(+) = pyruvate + NADH + H(+). Its pathway is fermentation; pyruvate fermentation to lactate; (S)-lactate from pyruvate: step 1/1. With respect to regulation, allosterically activated by fructose 1,6-bisphosphate (FBP). Its function is as follows. Catalyzes the conversion of lactate to pyruvate. The polypeptide is L-lactate dehydrogenase (Allorhizobium ampelinum (strain ATCC BAA-846 / DSM 112012 / S4) (Agrobacterium vitis (strain S4))).